Here is a 168-residue protein sequence, read N- to C-terminus: Photosystem I assembly protein Ycf3 (168 aa).

TPR repeat units lie at residues 35–68 (AFTYYRDGMSAQSEGNYAEALQNYYEAMRLEIDP), 72–105 (SYILYNIGLIHTSNGEHTKALEYYFRALERNPFL), and 120–153 (GEQAIRQGDSEIAEAWFDQAAEYWKQAIALTPGN).

It belongs to the Ycf3 family.

It is found in the plastid. Its subcellular location is the chloroplast thylakoid membrane. Functionally, essential for the assembly of the photosystem I (PSI) complex. May act as a chaperone-like factor to guide the assembly of the PSI subunits. This Populus alba (White poplar) protein is Photosystem I assembly protein Ycf3.